Reading from the N-terminus, the 233-residue chain is Ion-translocating oxidoreductase complex subunit E (233 aa).

6 consecutive transmembrane segments (helical) span residues 18-38, 39-59, 69-89, 92-112, 128-148, and 182-202; these read ALVQ…ATNA, LGLG…VSAL, IPIY…LINA, FGLY…CIVI, ALDG…LGAL, and PFLL…LLAG.

The protein belongs to the NqrDE/RnfAE family. In terms of assembly, the complex is composed of six subunits: RnfA, RnfB, RnfC, RnfD, RnfE and RnfG.

Its subcellular location is the cell inner membrane. In terms of biological role, part of a membrane-bound complex that couples electron transfer with translocation of ions across the membrane. The protein is Ion-translocating oxidoreductase complex subunit E of Yersinia pseudotuberculosis serotype O:1b (strain IP 31758).